The following is a 743-amino-acid chain: Dystrobrevin alpha (743 aa).

Positions 1 to 288 (MIEDSGKRGN…SHSNQHQMKE (288 aa)) are interaction with MAGEE1. Residues 238–294 (FHPVECSYCHSESMMGFRYRCQQCHNYQLCQDCFWRGHAGGSHSNQHQMKEYTSWKS) form a ZZ-type zinc finger. Zn(2+) is bound by residues Cys-243, Cys-246, Cys-258, Cys-261, Cys-267, Cys-270, His-280, and His-284. Residues 400 to 450 (DRLADEHVLIGLYVNMLRNNPSCMLESSNRLDEEHRLIARYAARLAAESSS) are syntrophin-binding region. A coiled-coil region spans residues 461–556 (DISFTIDANK…EGLMKLLKTQ (96 aa)). The interval 556–575 (QGAGSPRSSPSHTISRPIPM) is disordered. The span at 557–569 (GAGSPRSSPSHTI) shows a compositional bias: polar residues. At Ser-662 the chain carries Phosphoserine.

Belongs to the dystrophin family. Dystrobrevin subfamily. Interacts with dystrophin, utrophin and the syntrophins SNTA1, SNTB1, SNTB2, SNTG1 and SNTG2. Interacts with MAGEE1. Binds dystrobrevin binding protein 1. Interacts with CTNNAL1. The interaction is required for correct localization of both CTNNAL1 and DTNA. In terms of assembly, does not interact with dystrophin. Phosphorylation of DTN-1 on tyrosine kinase substrate domain present in the C-terminus. As to expression, highly expressed in brain, skeletal and cardiac muscles, and expressed at lower levels in lung, liver and pancreas. Isoform 2 is not expressed in cardiac muscle. Isoform 7 and isoform 8 are only expressed in muscle.

It is found in the cytoplasm. The protein localises to the synapse. The protein resides in the cell membrane. May be involved in the formation and stability of synapses as well as being involved in the clustering of nicotinic acetylcholine receptors. The sequence is that of Dystrobrevin alpha from Homo sapiens (Human).